A 260-amino-acid polypeptide reads, in one-letter code: uncharacterized protein (260 aa).

The first 22 residues, 1–22, serve as a signal peptide directing secretion; it reads MGYSKRFALYISILILIVMVAG. Cysteine 23 carries the N-palmitoyl cysteine lipid modification. Cysteine 23 carries the S-diacylglycerol cysteine lipid modification.

This sequence belongs to the staphylococcal tandem lipoprotein family.

The protein resides in the cell membrane. This is an uncharacterized protein from Staphylococcus aureus (strain N315).